We begin with the raw amino-acid sequence, 156 residues long: UPF0225 protein PFLU_1319 (156 aa).

This sequence belongs to the UPF0225 family.

This Pseudomonas fluorescens (strain SBW25) protein is UPF0225 protein PFLU_1319.